Here is an 872-residue protein sequence, read N- to C-terminus: Bifunctional uridylyltransferase/uridylyl-removing enzyme (872 aa).

The interval 1–332 is uridylyltransferase; the sequence is MALPNKVKKL…PKHHQPIIQE (332 aa). The interval 333 to 691 is uridylyl-removing; that stretch reads LDRNFERIGN…VSNKAMHGGT (359 aa). Positions 450 to 572 constitute an HD domain; the sequence is VDEHTHRLIN…VKTERQLDYL (123 aa). 2 consecutive ACT domains span residues 692–773 and 799–872; these read QVFV…FKKN and LIEI…AETE.

It belongs to the GlnD family. Mg(2+) is required as a cofactor.

The catalysed reaction is [protein-PII]-L-tyrosine + UTP = [protein-PII]-uridylyl-L-tyrosine + diphosphate. The enzyme catalyses [protein-PII]-uridylyl-L-tyrosine + H2O = [protein-PII]-L-tyrosine + UMP + H(+). Uridylyltransferase (UTase) activity is inhibited by glutamine, while glutamine activates uridylyl-removing (UR) activity. Its function is as follows. Modifies, by uridylylation and deuridylylation, the PII regulatory proteins (GlnB and homologs), in response to the nitrogen status of the cell that GlnD senses through the glutamine level. Under low glutamine levels, catalyzes the conversion of the PII proteins and UTP to PII-UMP and PPi, while under higher glutamine levels, GlnD hydrolyzes PII-UMP to PII and UMP (deuridylylation). Thus, controls uridylylation state and activity of the PII proteins, and plays an important role in the regulation of nitrogen assimilation and metabolism. This Pseudoalteromonas translucida (strain TAC 125) protein is Bifunctional uridylyltransferase/uridylyl-removing enzyme.